The sequence spans 420 residues: Serine protease inhibitor A3B (420 aa).

An N-terminal signal peptide occupies residues 1 to 17 (MAFIAALGLLMAEICPA). Asn104 and Asn349 each carry an N-linked (GlcNAc...) asparagine glycan. The segment at 367-392 (GTEGDAITIVGYNFMSAKLKPVFVKF) is RCL.

The protein belongs to the serpin family.

Its subcellular location is the secreted. The chain is Serine protease inhibitor A3B (Serpina3b) from Mus musculus (Mouse).